Here is a 111-residue protein sequence, read N- to C-terminus: Large ribosomal subunit protein uL24 (111 aa).

This sequence belongs to the universal ribosomal protein uL24 family. As to quaternary structure, part of the 50S ribosomal subunit.

Functionally, one of two assembly initiator proteins, it binds directly to the 5'-end of the 23S rRNA, where it nucleates assembly of the 50S subunit. One of the proteins that surrounds the polypeptide exit tunnel on the outside of the subunit. The sequence is that of Large ribosomal subunit protein uL24 from Chlamydia pneumoniae (Chlamydophila pneumoniae).